The sequence spans 235 residues: Probable septum site-determining protein MinC (235 aa).

The tract at residues 104–125 (KAVRPAPVEPATPSEPPQNANP) is disordered. The span at 110–119 (PVEPATPSEP) shows a compositional bias: pro residues.

It belongs to the MinC family. Interacts with MinD and FtsZ.

Cell division inhibitor that blocks the formation of polar Z ring septums. Rapidly oscillates between the poles of the cell to destabilize FtsZ filaments that have formed before they mature into polar Z rings. Prevents FtsZ polymerization. The sequence is that of Probable septum site-determining protein MinC from Salmonella enteritidis PT4 (strain P125109).